The chain runs to 203 residues: Secreted RxLR effector protein RXLR-C28 (203 aa).

Positions 1 to 24 (MKAVKLTAAVVVLFMAPYVPITSS) are cleaved as a signal peptide. A glycan (N-linked (GlcNAc...) asparagine) is linked at Asn-32. A RxLR motif is present at residues 37–40 (RHLR). N-linked (GlcNAc...) asparagine glycosylation occurs at Asn-193.

This sequence belongs to the RxLR effector family.

The protein resides in the secreted. Its subcellular location is the host cytoplasm. Its function is as follows. Secreted effector that does not suppress pattern-triggered immunity (PTI) in plant host. The polypeptide is Secreted RxLR effector protein RXLR-C28 (Plasmopara halstedii (Downy mildew of sunflower)).